The following is a 659-amino-acid chain: Nitrate import ATP-binding protein NrtC (659 aa).

The region spanning 5–239 is the ABC transporter domain; it reads LAVDHVHQVF…RPRQRLEMME (235 aa). ATP is bound at residue 42–49; sequence GHSGCGKS. A linker region spans residues 255–278; sequence QQQRRAKRRAKAAAPAPAVAASQQ. The nrtA-like stretch occupies residues 279–659; that stretch reads KTVRLGFLPG…VAPIPLATSA (381 aa).

The protein belongs to the ABC transporter superfamily. Nitrate/nitrite/cyanate uptake transporter (NitT) (TC 3.A.1.16) family. As to quaternary structure, the complex is composed of two ATP-binding proteins (NrtC and NrtD), two transmembrane proteins (NrtB) and a solute-binding protein (NrtA).

The protein resides in the cell inner membrane. The catalysed reaction is nitrate(out) + ATP + H2O = nitrate(in) + ADP + phosphate + H(+). Transport is inhibited by ammonium. The C-terminal domain of NrtC is involved in the ammonium-promoted inhibition of the nitrate/nitrite transporter. Part of the ABC transporter complex NrtABCD involved in nitrate uptake. The complex is probably also involved in nitrite transport. Probably responsible for energy coupling to the transport system. This Synechococcus elongatus (strain ATCC 33912 / PCC 7942 / FACHB-805) (Anacystis nidulans R2) protein is Nitrate import ATP-binding protein NrtC.